Here is a 999-residue protein sequence, read N- to C-terminus: uncharacterized protein (999 aa).

Residues 45 to 128 (NSNNIGNGNG…TPTITPSSPS (84 aa)) show a composition bias toward low complexity. Residues 45–129 (NSNNIGNGNG…PTITPSSPSV (85 aa)) form a disordered region. A coiled-coil region spans residues 723-767 (YQQSQQQQSQQQQQQQQQQQQQQQQQQQQQQQQQQQQQQQQQQQQ). Residues 873 to 887 (NDINNANNSNNNNNN) are compositionally biased toward low complexity. The interval 873–904 (NDINNANNSNNNNNNQSQVLLSPNRNKDGTLN) is disordered. Residues 976–996 (LFSLVLILAFIWFFFEIYFFF) form a helical membrane-spanning segment.

The protein localises to the membrane. This is an uncharacterized protein from Dictyostelium discoideum (Social amoeba).